A 323-amino-acid chain; its full sequence is Delta-aminolevulinic acid dehydratase (323 aa).

The Zn(2+) site is built by Cys-118, Cys-120, and Cys-128. Lys-195 serves as the catalytic Schiff-base intermediate with substrate. Positions 205 and 217 each coordinate 5-aminolevulinate. Glu-233 is a Mg(2+) binding site. Lys-248 serves as the catalytic Schiff-base intermediate with substrate. Residues Ser-274 and Tyr-313 each coordinate 5-aminolevulinate.

The protein belongs to the ALAD family. Homooctamer. Requires Zn(2+) as cofactor.

It carries out the reaction 2 5-aminolevulinate = porphobilinogen + 2 H2O + H(+). Its pathway is porphyrin-containing compound metabolism; protoporphyrin-IX biosynthesis; coproporphyrinogen-III from 5-aminolevulinate: step 1/4. Its function is as follows. Catalyzes an early step in the biosynthesis of tetrapyrroles. Binds two molecules of 5-aminolevulinate per subunit, each at a distinct site, and catalyzes their condensation to form porphobilinogen. The sequence is that of Delta-aminolevulinic acid dehydratase (hemB) from Staphylococcus aureus.